An 87-amino-acid polypeptide reads, in one-letter code: UPF0250 protein PC1_1177 (87 aa).

It belongs to the UPF0250 family.

This is UPF0250 protein PC1_1177 from Pectobacterium carotovorum subsp. carotovorum (strain PC1).